A 252-amino-acid polypeptide reads, in one-letter code: Diphthine synthase (252 aa).

Residues Leu9, Asp85, Val88, 113 to 114 (SI), Leu165, Ala204, and His229 contribute to the S-adenosyl-L-methionine site.

The protein belongs to the diphthine synthase family. Homodimer.

The enzyme catalyses 2-[(3S)-amino-3-carboxypropyl]-L-histidyl-[translation elongation factor 2] + 3 S-adenosyl-L-methionine = diphthine-[translation elongation factor 2] + 3 S-adenosyl-L-homocysteine + 3 H(+). It participates in protein modification; peptidyl-diphthamide biosynthesis. Its function is as follows. S-adenosyl-L-methionine-dependent methyltransferase that catalyzes the trimethylation of the amino group of the modified target histidine residue in translation elongation factor 2 (EF-2), to form an intermediate called diphthine. The three successive methylation reactions represent the second step of diphthamide biosynthesis. The sequence is that of Diphthine synthase from Methanocorpusculum labreanum (strain ATCC 43576 / DSM 4855 / Z).